Consider the following 309-residue polypeptide: Homoserine kinase (309 aa).

91–101 (PIGSGLGSSAC) lines the ATP pocket.

It belongs to the GHMP kinase family. Homoserine kinase subfamily.

The protein resides in the cytoplasm. The catalysed reaction is L-homoserine + ATP = O-phospho-L-homoserine + ADP + H(+). The protein operates within amino-acid biosynthesis; L-threonine biosynthesis; L-threonine from L-aspartate: step 4/5. Functionally, catalyzes the ATP-dependent phosphorylation of L-homoserine to L-homoserine phosphate. This chain is Homoserine kinase, found in Yersinia pseudotuberculosis serotype O:1b (strain IP 31758).